We begin with the raw amino-acid sequence, 179 residues long: Large ribosomal subunit protein uL5 (179 aa).

This sequence belongs to the universal ribosomal protein uL5 family. In terms of assembly, part of the 50S ribosomal subunit; part of the 5S rRNA/L5/L18/L25 subcomplex. Contacts the 5S rRNA and the P site tRNA. Forms a bridge to the 30S subunit in the 70S ribosome.

In terms of biological role, this is one of the proteins that bind and probably mediate the attachment of the 5S RNA into the large ribosomal subunit, where it forms part of the central protuberance. In the 70S ribosome it contacts protein S13 of the 30S subunit (bridge B1b), connecting the 2 subunits; this bridge is implicated in subunit movement. Contacts the P site tRNA; the 5S rRNA and some of its associated proteins might help stabilize positioning of ribosome-bound tRNAs. This Edwardsiella ictaluri (strain 93-146) protein is Large ribosomal subunit protein uL5.